The primary structure comprises 467 residues: Chromosomal replication initiator protein DnaA (467 aa).

The interval 1-90 (MSLSLWQQCL…KSVTQTPQAA (90 aa)) is domain I, interacts with DnaA modulators. A domain II region spans residues 91–130 (VTSNVAAPAQVAQTQPQRAAPSTRSGWDNVPAPAEPTYRS). Positions 97–111 (APAQVAQTQPQRAAP) are enriched in low complexity. Residues 97-119 (APAQVAQTQPQRAAPSTRSGWDN) form a disordered region. A domain III, AAA+ region region spans residues 131-347 (NVNVKHTFDN…GALNRVIANA (217 aa)). The ATP site is built by G175, G177, K178, and T179. Positions 348-467 (NFTGRAITID…FSNLIRTLSS (120 aa)) are domain IV, binds dsDNA.

It belongs to the DnaA family. As to quaternary structure, oligomerizes as a right-handed, spiral filament on DNA at oriC.

The protein resides in the cytoplasm. Its function is as follows. Plays an essential role in the initiation and regulation of chromosomal replication. ATP-DnaA binds to the origin of replication (oriC) to initiate formation of the DNA replication initiation complex once per cell cycle. Binds the DnaA box (a 9 base pair repeat at the origin) and separates the double-stranded (ds)DNA. Forms a right-handed helical filament on oriC DNA; dsDNA binds to the exterior of the filament while single-stranded (ss)DNA is stabiized in the filament's interior. The ATP-DnaA-oriC complex binds and stabilizes one strand of the AT-rich DNA unwinding element (DUE), permitting loading of DNA polymerase. After initiation quickly degrades to an ADP-DnaA complex that is not apt for DNA replication. Binds acidic phospholipids. This Escherichia coli O157:H7 protein is Chromosomal replication initiator protein DnaA.